Consider the following 491-residue polypeptide: Ketol-acid reductoisomerase (NADP(+)) (491 aa).

A KARI N-terminal Rossmann domain is found at 15–208 (AQLGKCRFMG…GGHRAGVLES (194 aa)). NADP(+)-binding positions include 45-48 (CGAQ), Arg-68, Arg-76, Ser-78, and 108-110 (DKQ). The active site involves His-132. Gly-158 lines the NADP(+) pocket. 2 consecutive KARI C-terminal knotted domains span residues 209-344 (SFVA…TAPQ) and 345-484 (YEGK…MTDM). Asp-217, Glu-221, Glu-389, and Glu-393 together coordinate Mg(2+). A substrate-binding site is contributed by Ser-414.

Belongs to the ketol-acid reductoisomerase family. Requires Mg(2+) as cofactor.

The catalysed reaction is (2R)-2,3-dihydroxy-3-methylbutanoate + NADP(+) = (2S)-2-acetolactate + NADPH + H(+). The enzyme catalyses (2R,3R)-2,3-dihydroxy-3-methylpentanoate + NADP(+) = (S)-2-ethyl-2-hydroxy-3-oxobutanoate + NADPH + H(+). Its pathway is amino-acid biosynthesis; L-isoleucine biosynthesis; L-isoleucine from 2-oxobutanoate: step 2/4. The protein operates within amino-acid biosynthesis; L-valine biosynthesis; L-valine from pyruvate: step 2/4. Involved in the biosynthesis of branched-chain amino acids (BCAA). Catalyzes an alkyl-migration followed by a ketol-acid reduction of (S)-2-acetolactate (S2AL) to yield (R)-2,3-dihydroxy-isovalerate. In the isomerase reaction, S2AL is rearranged via a Mg-dependent methyl migration to produce 3-hydroxy-3-methyl-2-ketobutyrate (HMKB). In the reductase reaction, this 2-ketoacid undergoes a metal-dependent reduction by NADPH to yield (R)-2,3-dihydroxy-isovalerate. In Escherichia coli O8 (strain IAI1), this protein is Ketol-acid reductoisomerase (NADP(+)).